An 83-amino-acid polypeptide reads, in one-letter code: Small ribosomal subunit protein eS21 (83 aa).

The protein belongs to the eukaryotic ribosomal protein eS21 family. As to quaternary structure, component of the 40S small ribosomal subunit.

It localises to the cytoplasm. It is found in the cytosol. The protein resides in the rough endoplasmic reticulum. In terms of biological role, component of the small ribosomal subunit. The ribosome is a large ribonucleoprotein complex responsible for the synthesis of proteins in the cell. The sequence is that of Small ribosomal subunit protein eS21 (rps21) from Ictalurus punctatus (Channel catfish).